The primary structure comprises 108 residues: Colipase B (108 aa).

Residues 1–13 (LALLLVALAVAYA) form the signal peptide. Positions 14-18 (VPDPR) are cleaved as a propeptide — enterostatin, activation peptide. Disulfide bonds link Cys30/Cys41, Cys36/Cys52, Cys40/Cys74, Cys62/Cys82, and Cys76/Cys100. Trp65 lines the taurodeoxycholate pocket.

The protein belongs to the colipase family. Forms a 1:1 stoichiometric complex with pancreatic lipase. Expressed by the pancreas.

The protein localises to the secreted. Colipase is a cofactor of pancreatic lipase. It allows the lipase to anchor itself to the lipid-water interface. Without colipase the enzyme is washed off by bile salts, which have an inhibitory effect on the lipase. Functionally, enterostatin has a biological activity as a satiety signal. In Equus caballus (Horse), this protein is Colipase B (CLPS2).